A 281-amino-acid chain; its full sequence is Shikimate dehydrogenase (NADP(+)) (281 aa).

Residues 14 to 16 (SKS) and Thr-61 contribute to the shikimate site. Lys-65 (proton acceptor) is an active-site residue. Asn-86 and Asp-105 together coordinate shikimate. Residues 130–134 (GAGGA), 154–159 (NRTAAK), and Met-221 each bind NADP(+). Tyr-223 provides a ligand contact to shikimate. Residue Gly-245 participates in NADP(+) binding.

It belongs to the shikimate dehydrogenase family. In terms of assembly, homodimer.

It catalyses the reaction shikimate + NADP(+) = 3-dehydroshikimate + NADPH + H(+). The protein operates within metabolic intermediate biosynthesis; chorismate biosynthesis; chorismate from D-erythrose 4-phosphate and phosphoenolpyruvate: step 4/7. In terms of biological role, involved in the biosynthesis of the chorismate, which leads to the biosynthesis of aromatic amino acids. Catalyzes the reversible NADPH linked reduction of 3-dehydroshikimate (DHSA) to yield shikimate (SA). This is Shikimate dehydrogenase (NADP(+)) from Azoarcus sp. (strain BH72).